Consider the following 90-residue polypeptide: MARTVFCEYLKKEAEGLDFQLYPGELGKRIFDSVSKQAWSEWIKKQTMLVNEKKLNMMNAEHRKLLEQEMVNFLFEGKDVHIEGYVPPSN.

It belongs to the Fe(2+)-trafficking protein family.

Its function is as follows. Could be a mediator in iron transactions between iron acquisition and iron-requiring processes, such as synthesis and/or repair of Fe-S clusters in biosynthetic enzymes. In Haemophilus influenzae (strain PittEE), this protein is Probable Fe(2+)-trafficking protein.